The chain runs to 414 residues: Gamma-glutamyl phosphate reductase (414 aa).

The protein belongs to the gamma-glutamyl phosphate reductase family.

It is found in the cytoplasm. The enzyme catalyses L-glutamate 5-semialdehyde + phosphate + NADP(+) = L-glutamyl 5-phosphate + NADPH + H(+). It participates in amino-acid biosynthesis; L-proline biosynthesis; L-glutamate 5-semialdehyde from L-glutamate: step 2/2. Its function is as follows. Catalyzes the NADPH-dependent reduction of L-glutamate 5-phosphate into L-glutamate 5-semialdehyde and phosphate. The product spontaneously undergoes cyclization to form 1-pyrroline-5-carboxylate. The protein is Gamma-glutamyl phosphate reductase of Xanthomonas campestris pv. campestris (strain ATCC 33913 / DSM 3586 / NCPPB 528 / LMG 568 / P 25).